Reading from the N-terminus, the 210-residue chain is Protein GET1 (210 aa).

Topologically, residues 1-4 (MPSL) are lumenal. The chain crosses the membrane as a helical span at residues 5–24 (LIIVLIIHVVTYLINTIGAN). Topologically, residues 25-110 (TIDSLLWLLY…SFDLAVKSIR (86 aa)) are cytoplasmic. The stretch at 39 to 95 (NQTSQTANEQRRLKREVMQLKREMNATSSQDEFAKWAKLRRRHDKTMEEYEAKNKAL) forms a coiled coil. The chain crosses the membrane as a helical span at residues 111-131 (FFSTTGLKLFLQFWCSKTPIF). Residues 132–155 (ELPRGWIPWQVEWVLSFPRAPLGT) lie on the Lumenal side of the membrane. Residues 156 to 172 (VSIQIWGGVCATVVSLA) form a helical membrane-spanning segment. The Cytoplasmic segment spans residues 173–210 (GDAIGVVNVYLTSKAPKQKEPATSGENSARPMAIKKEL). The tract at residues 189–210 (KQKEPATSGENSARPMAIKKEL) is disordered.

This sequence belongs to the WRB/GET1 family. As to quaternary structure, interacts with GET3.

It localises to the endoplasmic reticulum membrane. Its function is as follows. Required for the post-translational delivery of tail-anchored (TA) proteins to the endoplasmic reticulum. Acts as a membrane receptor for soluble GET3, which recognizes and selectively binds the transmembrane domain of TA proteins in the cytosol. The sequence is that of Protein GET1 from Coccidioides immitis (strain RS) (Valley fever fungus).